A 195-amino-acid polypeptide reads, in one-letter code: uncharacterized protein (195 aa).

The region spanning 10–70 is the HTH tetR-type domain; the sequence is EETVARLLQA…ATAYEVLRRQ (61 aa). Positions 33-52 form a DNA-binding region, H-T-H motif; that stretch reads SAAVITKRAGVSVGALFRHF.

This is an uncharacterized protein from Mycobacterium tuberculosis (strain CDC 1551 / Oshkosh).